Consider the following 260-residue polypeptide: Ribosomal RNA small subunit methyltransferase A (260 aa).

The S-adenosyl-L-methionine site is built by asparagine 16, leucine 18, glycine 43, glutamate 64, aspartate 86, and asparagine 108.

It belongs to the class I-like SAM-binding methyltransferase superfamily. rRNA adenine N(6)-methyltransferase family. RsmA subfamily.

Its subcellular location is the cytoplasm. The catalysed reaction is adenosine(1518)/adenosine(1519) in 16S rRNA + 4 S-adenosyl-L-methionine = N(6)-dimethyladenosine(1518)/N(6)-dimethyladenosine(1519) in 16S rRNA + 4 S-adenosyl-L-homocysteine + 4 H(+). Functionally, specifically dimethylates two adjacent adenosines (A1518 and A1519) in the loop of a conserved hairpin near the 3'-end of 16S rRNA in the 30S particle. May play a critical role in biogenesis of 30S subunits. In Buchnera aphidicola subsp. Baizongia pistaciae (strain Bp), this protein is Ribosomal RNA small subunit methyltransferase A.